A 401-amino-acid polypeptide reads, in one-letter code: Cytochrome P450 BJ-1 (401 aa).

Residue Cys-350 participates in heme binding.

This sequence belongs to the cytochrome P450 family. Heme serves as cofactor.

Cytochromes P450 are a group of heme-thiolate monooxygenases. They oxidize a variety of structurally unrelated compounds, including steroids, fatty acids, and xenobiotics. This chain is Cytochrome P450 BJ-1 (cyp112), found in Bradyrhizobium diazoefficiens (strain JCM 10833 / BCRC 13528 / IAM 13628 / NBRC 14792 / USDA 110).